Here is a 149-residue protein sequence, read N- to C-terminus: MKYQQLENLECGWKWQYLINKWKDGETITKYIDSSEADHAVSELRKLEHEPTKVLEWIDLHMAEELDKKLKQAIRGKRKRHFNAEQIHTKKKSIDLDYRVWEKLSTRANELGCTLSDAIEYLLSEASRSEKASAAVSTLKEDLSKLLSD.

The protein belongs to the MatP family. Homodimer.

The protein resides in the cytoplasm. Its function is as follows. Required for spatial organization of the terminus region of the chromosome (Ter macrodomain) during the cell cycle. Prevents early segregation of duplicated Ter macrodomains during cell division. Binds specifically to matS, which is a 13 bp signature motif repeated within the Ter macrodomain. This Vibrio vulnificus (strain CMCP6) protein is Macrodomain Ter protein.